The primary structure comprises 209 residues: Hydrogenase expression/formation protein HupM (209 aa).

Ni(2+)-binding residues include Glu-21, Asp-67, and His-98.

This sequence belongs to the peptidase A31 family.

Functionally, not known. Could be involved in the processing of hydrogenase. This Azotobacter chroococcum mcd 1 protein is Hydrogenase expression/formation protein HupM (hupM).